Reading from the N-terminus, the 40-residue chain is Unknown protein from spot 207 of 2D-PAGE of etiolated coleoptile (40 aa).

Belongs to the GST superfamily. HSP26 family.

The polypeptide is Unknown protein from spot 207 of 2D-PAGE of etiolated coleoptile (Zea mays (Maize)).